The following is a 303-amino-acid chain: Crk-like protein (303 aa).

Residues 14–102 (WYMGPVSRQE…LDTTTLIEPA (89 aa)) form the SH2 domain. Positions 123–183 (DNLEYVRTLY…PVPYVEKLVR (61 aa)) constitute an SH3 1 domain. Tyrosine 127 and tyrosine 207 each carry phosphotyrosine. Residues 184–234 (SSPHGKHGNRNSNSYGIPEPAHAYAQPQTTTPLPAVSGSPGAAITPLPSTQ) are disordered. The region spanning 235–296 (NGPVFAKAIQ…PFTHVKIFDP (62 aa)) is the SH3 2 domain.

The protein belongs to the CRK family. As to quaternary structure, interacts with tyrosine-phosphorylated EPOR and INPP5D/SHIP1. Interacts with DOCK2 and DOCK5 via its first SH3 domain. Interacts with phosphorylated CBLB and IRS4. Interacts with BCAR1/CAS and NEDD9/HEF1.

Functionally, may mediate the transduction of intracellular signals. The sequence is that of Crk-like protein (CRKL) from Homo sapiens (Human).